Reading from the N-terminus, the 197-residue chain is Nucleoside triphosphate pyrophosphatase (197 aa).

The Proton acceptor role is filled by Asp-72.

The protein belongs to the Maf family. A divalent metal cation is required as a cofactor.

The protein localises to the cytoplasm. The catalysed reaction is a ribonucleoside 5'-triphosphate + H2O = a ribonucleoside 5'-phosphate + diphosphate + H(+). It catalyses the reaction a 2'-deoxyribonucleoside 5'-triphosphate + H2O = a 2'-deoxyribonucleoside 5'-phosphate + diphosphate + H(+). Functionally, nucleoside triphosphate pyrophosphatase. May have a dual role in cell division arrest and in preventing the incorporation of modified nucleotides into cellular nucleic acids. The sequence is that of Nucleoside triphosphate pyrophosphatase from Corynebacterium glutamicum (strain R).